The following is a 472-amino-acid chain: Inhibitor of Apoptosis OPG037 (472 aa).

ANK repeat units follow at residues 97-126 (DGNY…DPNA), 130-161 (HNKT…KINN), 233-263 (DGNT…DVNK), 267-297 (FGDS…VITD), 322-351 (YDST…ICED), and 353-377 (MYYA…SVDS).

Belongs to the orthopoxvirus OPG037 protein family. In terms of assembly, may interact with host caspase-9-Apaf-1 complex.

The protein localises to the host cytoplasm. In terms of biological role, inhibits host apoptosis. Acts by associating with host apoptosome. The protein is Inhibitor of Apoptosis OPG037 (OPG037) of Homo sapiens (Human).